The chain runs to 352 residues: MTDRIVGAAKREEDELERSLRPQVLSDFVGQARARENLAVFIEAARTRAEALDHVLFAGPPGLGKTTLAQIVARELGVNFRATSGPVISKAGDLAALLTNLEPRDVLFIDEIHRLSPAVEEILYPAMEDFQLDLIIGEGPGARSVRIELAPFTLIGATTRTGLLTTPLRDRFGIPVRLHFYEVAELEGIVRRGASVLGVAMTPDGAHEIARRARGTPRVAGRLLRRVRDFASVEGVKSIDAKAADKALQRLEVDELGLDALDHRYLRCIAVSFSGGPVGVETIAASLSEPRDAIEEIIEPYLIQQGLVNRTPRGRTLTPAAFAHIGVALPAGRSGEPGQARLFDGDEENGSA.

The large ATPase domain (RuvB-L) stretch occupies residues 1–181; the sequence is MTDRIVGAAK…FGIPVRLHFY (181 aa). ATP contacts are provided by residues Leu-20, Arg-21, Gly-62, Lys-65, Thr-66, Thr-67, 128-130, Arg-171, Tyr-181, and Arg-218; that span reads EDF. Thr-66 provides a ligand contact to Mg(2+). The small ATPAse domain (RuvB-S) stretch occupies residues 182–252; the sequence is EVAELEGIVR…AADKALQRLE (71 aa). The tract at residues 255–352 is head domain (RuvB-H); that stretch reads ELGLDALDHR…FDGDEENGSA (98 aa). Residues Arg-291, Arg-310, and Arg-315 each coordinate DNA.

This sequence belongs to the RuvB family. Homohexamer. Forms an RuvA(8)-RuvB(12)-Holliday junction (HJ) complex. HJ DNA is sandwiched between 2 RuvA tetramers; dsDNA enters through RuvA and exits via RuvB. An RuvB hexamer assembles on each DNA strand where it exits the tetramer. Each RuvB hexamer is contacted by two RuvA subunits (via domain III) on 2 adjacent RuvB subunits; this complex drives branch migration. In the full resolvosome a probable DNA-RuvA(4)-RuvB(12)-RuvC(2) complex forms which resolves the HJ.

The protein localises to the cytoplasm. It carries out the reaction ATP + H2O = ADP + phosphate + H(+). In terms of biological role, the RuvA-RuvB-RuvC complex processes Holliday junction (HJ) DNA during genetic recombination and DNA repair, while the RuvA-RuvB complex plays an important role in the rescue of blocked DNA replication forks via replication fork reversal (RFR). RuvA specifically binds to HJ cruciform DNA, conferring on it an open structure. The RuvB hexamer acts as an ATP-dependent pump, pulling dsDNA into and through the RuvAB complex. RuvB forms 2 homohexamers on either side of HJ DNA bound by 1 or 2 RuvA tetramers; 4 subunits per hexamer contact DNA at a time. Coordinated motions by a converter formed by DNA-disengaged RuvB subunits stimulates ATP hydrolysis and nucleotide exchange. Immobilization of the converter enables RuvB to convert the ATP-contained energy into a lever motion, pulling 2 nucleotides of DNA out of the RuvA tetramer per ATP hydrolyzed, thus driving DNA branch migration. The RuvB motors rotate together with the DNA substrate, which together with the progressing nucleotide cycle form the mechanistic basis for DNA recombination by continuous HJ branch migration. Branch migration allows RuvC to scan DNA until it finds its consensus sequence, where it cleaves and resolves cruciform DNA. This is Holliday junction branch migration complex subunit RuvB from Parvibaculum lavamentivorans (strain DS-1 / DSM 13023 / NCIMB 13966).